The primary structure comprises 545 residues: Delta 8-(E)-sphingolipid desaturase (545 aa).

Residues 1-82 (MASHTKDALL…MLAFQIGRIQ (82 aa)) form the Cytochrome b5 heme-binding domain. Heme contacts are provided by His42 and His65. Residues 97-124 (FRHYDENADSEEDDTSGQSQPPSPIFDA) are disordered. The chain crosses the membrane as a helical span at residues 227 to 247 (LGWYSVSAVFLGCFWHQLVFS). The Histidine box-1 motif lies at 249 to 253 (HDAGH). A helical membrane pass occupies residues 262–282 (VDSIIGILIADFLGGLSLGWW). The Histidine box-2 motif lies at 286–290 (HNVHH). Helical transmembrane passes span 382-402 (IAGQ…CSIP) and 408-428 (LSFL…ITLS). A Histidine box-3 motif is present at residues 470-474 (QAIHH).

Belongs to the fatty acid desaturase type 1 family.

It is found in the membrane. The catalysed reaction is an N-acylsphing-4-enine + 2 Fe(II)-[cytochrome b5] + O2 + 2 H(+) = a (4E,8E)-4-sphinga-4,8-dienine ceramide + 2 Fe(III)-[cytochrome b5] + 2 H2O. It functions in the pathway lipid metabolism; sphingolipid metabolism. Its function is as follows. Delta(8)-fatty-acid desaturase which introduces a double bond at the 8-position in the long-chain base (LCB) of ceramides. Required for the formation of the di-unsaturated sphingoid base (E,E)-sphinga-4,8-dienine during glucosylceramide (GluCer) biosynthesis. Plays an important role in conidiation. In Emericella nidulans (strain FGSC A4 / ATCC 38163 / CBS 112.46 / NRRL 194 / M139) (Aspergillus nidulans), this protein is Delta 8-(E)-sphingolipid desaturase.